We begin with the raw amino-acid sequence, 404 residues long: Argininosuccinate synthase (404 aa).

An ATP-binding site is contributed by 9–17 (AYSGGLDTS). Residue tyrosine 86 participates in L-citrulline binding. Glycine 116 provides a ligand contact to ATP. Positions 118, 122, and 123 each coordinate L-aspartate. Residue asparagine 122 participates in L-citrulline binding. The L-citrulline site is built by arginine 126, serine 174, serine 183, glutamate 259, and tyrosine 271.

This sequence belongs to the argininosuccinate synthase family. Type 1 subfamily. As to quaternary structure, homotetramer.

It is found in the cytoplasm. The enzyme catalyses L-citrulline + L-aspartate + ATP = 2-(N(omega)-L-arginino)succinate + AMP + diphosphate + H(+). The protein operates within amino-acid biosynthesis; L-arginine biosynthesis; L-arginine from L-ornithine and carbamoyl phosphate: step 2/3. This is Argininosuccinate synthase from Listeria innocua serovar 6a (strain ATCC BAA-680 / CLIP 11262).